Consider the following 607-residue polypeptide: Potassium transporter KimA (607 aa).

Over 1 to 30 (MYHSIKRFLIGKPLKSQAAGEQKLTKLKAL) the chain is Cytoplasmic. Residues 31-49 (AMLSSDALSSVAYGTEQIL) form a helical membrane-spanning segment. Positions 36 and 43 each coordinate K(+). The Extracellular portion of the chain corresponds to 50–62 (IILATISAAAFWY). Residues 63–84 (SIPIAVGVLILLLALILSYRQI) form a helical membrane-spanning segment. The Cytoplasmic segment spans residues 85–105 (IYAYPQGGGAYIVSKENLGEK). Residues 106 to 134 (PGLIAGGSLLVDYILTVAVSISAGTDAIT) form a helical membrane-spanning segment. Positions 117 and 125 each coordinate K(+). The Extracellular portion of the chain corresponds to 135-142 (SAFPALHD). A helical transmembrane segment spans residues 143–162 (YHVPIAIFLVLVIMILNLRG). The Cytoplasmic portion of the chain corresponds to 163–166 (LSES). The helical transmembrane segment at 167–190 (ASILAYPVYLFVVALLVLIAVGLF) threads the bilayer. The Extracellular portion of the chain corresponds to 191 to 214 (KLMTGQIDQPAHHTSLGTPVAGIT). The chain crosses the membrane as a helical span at residues 215 to 238 (LFLLLKAFSSGCSALTGVEAISNA). Residues 239-249 (IPAFKNPPARN) lie on the Cytoplasmic side of the membrane. Residues 250–271 (AARTLAMMGILLAILFSGITVL) form a helical membrane-spanning segment. The Extracellular portion of the chain corresponds to 272–298 (AYGYGTAPKPDETVVSQIASETFGRNV). A helical transmembrane segment spans residues 299 to 323 (FYYVIQGVTSLILVLAANTGFSAFP). The Cytoplasmic portion of the chain corresponds to 324–347 (QLAFNLARDQYMPRMFTVRGDRLG). Residues 348–366 (FSNGIIFLGFASIVLIILF) form a helical membrane-spanning segment. The Extracellular segment spans residues 367–372 (GGQTEH). Residues 373–393 (LIPLYAVGVFIPFTLSQTGMC) traverse the membrane as a helical segment. Topologically, residues 394–405 (MKWIKQKPKGWI) are cytoplasmic. A helical transmembrane segment spans residues 406–428 (GKMLINSCGALISFMVLSILFVT). Residues 429-431 (KFN) are Extracellular-facing. The helical transmembrane segment at 432–447 (VVWPVLIFMPIVVLLF) threads the bilayer. The Cytoplasmic portion of the chain corresponds to 448 to 607 (FAIKNHYTAV…VATLPYHFKK (160 aa)).

It belongs to the amino acid-polyamine-organocation (APC) superfamily. As to quaternary structure, homodimer.

Its subcellular location is the cell membrane. The enzyme catalyses K(+)(in) + H(+)(in) = K(+)(out) + H(+)(out). Its activity is regulated as follows. Potassium uptake increases at lower external pH and is abolished by the proton ionophore carbonyl cyanide m-chlorophenylhydrazone (CCCP). Binds cyclic di-AMP (c-di-AMP), which inhibits the potassium transport activity. Its function is as follows. High-affinity potassium transporter. Functions as a K(+)/H(+) symporter. This chain is Potassium transporter KimA, found in Bacillus subtilis (strain 168).